The primary structure comprises 172 residues: Adenine phosphoribosyltransferase (172 aa).

The protein belongs to the purine/pyrimidine phosphoribosyltransferase family. Homodimer.

It localises to the cytoplasm. It catalyses the reaction AMP + diphosphate = 5-phospho-alpha-D-ribose 1-diphosphate + adenine. It participates in purine metabolism; AMP biosynthesis via salvage pathway; AMP from adenine: step 1/1. Its function is as follows. Catalyzes a salvage reaction resulting in the formation of AMP, that is energically less costly than de novo synthesis. In Streptococcus pyogenes serotype M5 (strain Manfredo), this protein is Adenine phosphoribosyltransferase.